The chain runs to 1237 residues: Tyrosine-protein kinase sid-3 (1237 aa).

The region spanning 107–369 is the Protein kinase domain; the sequence is IKLYELIGEG…REDLVAAMFL (263 aa). Residues 113 to 121 and Lys-139 contribute to the ATP site; that span reads IGEGSFAVV. Catalysis depends on Asp-230, which acts as the Proton acceptor. Residues 366 to 426 form the SH3 domain; the sequence is AMFLDAVARE…PRSVVFAQTN (61 aa). Disordered stretches follow at residues 683–704, 741–802, 826–919, 940–986, 999–1018, and 1134–1156; these read NQGS…GIQN, PPAP…APVQ, IQPQ…EERR, SNST…SEPI, SATT…PSPP, and QQRQ…SAAS. Polar residues-rich tracts occupy residues 749–766, 778–791, and 847–863; these read QPVS…TLQK, KRPT…SNGF, and SAPT…SQAS. Composition is skewed to low complexity over residues 881–910 and 940–961; these read TPIT…TSTT and SNST…PSTA. Over residues 1138-1156 the composition is skewed to low complexity; that stretch reads AGSSSRAVPPASASTSAAS.

Belongs to the protein kinase superfamily. Tyr protein kinase family. SYK/ZAP-70 subfamily. In terms of tissue distribution, ubiquitously present in all tissues tested. Expressed in the somatic cells of gut, pharynx, body wall muscle, neurons, skin and excretory canal cells.

Its subcellular location is the cytoplasm. The catalysed reaction is L-tyrosyl-[protein] + ATP = O-phospho-L-tyrosyl-[protein] + ADP + H(+). Tyrosine-protein kinase which plays a role in RNA-mediated gene silencing by mediating import of double-stranded RNA (dsRNA) into cells. Not required for import of ingested dsRNA into intestinal cells but involved in subsequent export from intestinal cells to internal tissues. The polypeptide is Tyrosine-protein kinase sid-3 (sid-3) (Caenorhabditis elegans).